The primary structure comprises 675 residues: Methionine--tRNA ligase (675 aa).

The 'HIGH' region motif lies at 15–25; it reads PYANGSIHLGH. Cys-146, Cys-149, Cys-159, and Cys-162 together coordinate Zn(2+). Residues 332 to 336 carry the 'KMSKS' region motif; sequence KMSKS. An ATP-binding site is contributed by Lys-335. The 103-residue stretch at 573-675 folds into the tRNA-binding domain; that stretch reads DFAKVDMRIA…SGAQPGMQVK (103 aa).

The protein belongs to the class-I aminoacyl-tRNA synthetase family. MetG type 1 subfamily. In terms of assembly, homodimer. It depends on Zn(2+) as a cofactor.

Its subcellular location is the cytoplasm. The catalysed reaction is tRNA(Met) + L-methionine + ATP = L-methionyl-tRNA(Met) + AMP + diphosphate. In terms of biological role, is required not only for elongation of protein synthesis but also for the initiation of all mRNA translation through initiator tRNA(fMet) aminoacylation. In Serratia proteamaculans (strain 568), this protein is Methionine--tRNA ligase.